We begin with the raw amino-acid sequence, 318 residues long: Isoflavone reductase (318 aa).

Residues 11 to 17, arginine 36, and lysine 44 contribute to the NADP(+) site; that span reads GPTGAIG. Lysine 144 (proton acceptor) is an active-site residue. Residue arginine 148 coordinates NADP(+).

This sequence belongs to the NmrA-type oxidoreductase family. Isoflavone reductase subfamily.

The catalysed reaction is (3R)-vestitone + NADP(+) = 2'-hydroxyformononetin + NADPH + 2 H(+). Its pathway is phytoalexin biosynthesis; pterocarpan phytoalexin biosynthesis. Functionally, reduces achiral isoflavones to chiral isoflavanones during the biosynthesis of chiral pterocarpan phytoalexins. The reduction product is a third isomer, which represents the penultimate intermediate in the synthesis of the phytoalexin (-)-medicarpin, the major phytoalexin in Alfalfa. The sequence is that of Isoflavone reductase from Medicago sativa (Alfalfa).